Consider the following 129-residue polypeptide: Large ribosomal subunit protein bL17 (129 aa).

The protein belongs to the bacterial ribosomal protein bL17 family. As to quaternary structure, part of the 50S ribosomal subunit. Contacts protein L32.

The chain is Large ribosomal subunit protein bL17 from Yersinia enterocolitica serotype O:8 / biotype 1B (strain NCTC 13174 / 8081).